The sequence spans 139 residues: Histone H2B (139 aa).

Basic and acidic residues predominate over residues 1–10; sequence MAPKVAEKKP. A disordered region spans residues 1 to 47; the sequence is MAPKVAEKKPSLAGKAPAGKAPAEKKEAGKKTTTATGEKKKRTKARK. 2 positions are modified to N6-acetyllysine; alternate: Lys8 and Lys9. Glycyl lysine isopeptide (Lys-Gly) (interchain with G-Cter in SUMO); alternate cross-links involve residues Lys8 and Lys9. Residue Lys15 is modified to N6-acetyllysine. Lys25 is subject to N6-acetyllysine; alternate. Residue Lys25 forms a Glycyl lysine isopeptide (Lys-Gly) (interchain with G-Cter in SUMO); alternate linkage. Residue Lys26 forms a Glycyl lysine isopeptide (Lys-Gly) (interchain with G-Cter in SUMO) linkage. Residue Lys133 forms a Glycyl lysine isopeptide (Lys-Gly) (interchain with G-Cter in ubiquitin) linkage.

Belongs to the histone H2B family. In terms of assembly, the nucleosome is a histone octamer containing two molecules each of H2A, H2B, H3 and H4 assembled in one H3-H4 heterotetramer and two H2A-H2B heterodimers. The octamer wraps approximately 147 bp of DNA. In terms of processing, monoubiquitinated by the UBC2-BRE1 complex to form H2BK123ub1. H2BK123ub1 gives a specific tag for epigenetic transcriptional activation and is also prerequisite for H3K4me and H3K79me formation. H2BK123ub1 also modulates the formation of double-strand breaks during meiosis and is a prerequisite for DNA-damage checkpoint activation. Acetylated by GCN5 to form H2BK11ac and H2BK16ac. H2BK16ac can also be formed by ESA1. Acetylation of N-terminal lysines and particularly formation of H2BK11acK16ac has a positive effect on transcription. Post-translationally, sumoylation to form H2BK6su or H2BK7su, and probably also H2BK16su or H2BK17su, occurs preferentially near the telomeres and represses gene transcription.

It localises to the nucleus. The protein localises to the chromosome. In terms of biological role, core component of nucleosome. Nucleosomes wrap and compact DNA into chromatin, limiting DNA accessibility to the cellular machineries which require DNA as a template. Histones thereby play a central role in transcription regulation, DNA repair, DNA replication and chromosomal stability. DNA accessibility is regulated via a complex set of post-translational modifications of histones, also called histone code, and nucleosome remodeling. The sequence is that of Histone H2B (HTB1) from Yarrowia lipolytica (strain CLIB 122 / E 150) (Yeast).